The primary structure comprises 78 residues: Putative permease-like protein YdzE (78 aa).

3 consecutive transmembrane segments (helical) span residues 2–22 (YLGI…LQLL), 27–47 (GGLF…ILLG), and 49–69 (QIGG…LLVI). Residues 2–70 (YLGIVSTACA…ILSGVLLVIK (69 aa)) form the EamA domain.

The protein belongs to the EamA transporter family.

Its subcellular location is the cell membrane. In Bacillus subtilis (strain 168), this protein is Putative permease-like protein YdzE (ydzE).